The sequence spans 255 residues: MRILLSNDDGYFAPGLACLAEALSVIADIVVVAPERDRSGASNSLTLDRPLSLRKSHNGFYYVNGTPTDCVHLAVTGMLDTLPDMVVSGINDGANMGDDTIYSGTVAAATEGFLLGVPSLAISLAGFSAGNFPTAARVAAEIVRRFETDKLHGPVLLNINVPDIPYDELQGLEVTRLGRRHKAEPVVKYKTPRGETVYWVGAAGPAQDAGEGTDFLAIQRKRVSVTPLQIDLTRYGQLDAVKEWLNSHALGSTRS.

The a divalent metal cation site is built by Asp8, Asp9, Ser39, and Asn91.

The protein belongs to the SurE nucleotidase family. A divalent metal cation serves as cofactor.

It localises to the cytoplasm. It carries out the reaction a ribonucleoside 5'-phosphate + H2O = a ribonucleoside + phosphate. Nucleotidase that shows phosphatase activity on nucleoside 5'-monophosphates. The polypeptide is 5'-nucleotidase SurE (Nitrosospira multiformis (strain ATCC 25196 / NCIMB 11849 / C 71)).